The sequence spans 230 residues: MRLVIARCSVDYIGRLEAHLPMADRLLMVKADGSVSIHADDRAYKPLNWMTPPCTLTETPITDEDGEEVGVHLWVVENKKGEQLRITVEKIHSELSHDLGVDPGLVKDGVEDHLQELLAEHITTLGEGYTLVRREYPTAIGPVDILCRDADGQTVAVEIKRRGNIDGVEQLSRYLELLNRDELLKPVQGVFAAQEIKPQARTLAEDRGIRCVTLDYQTLRGIESNELTLF.

This sequence belongs to the NucS endonuclease family.

It is found in the cytoplasm. Functionally, cleaves both 3' and 5' ssDNA extremities of branched DNA structures. This Corynebacterium efficiens (strain DSM 44549 / YS-314 / AJ 12310 / JCM 11189 / NBRC 100395) protein is Endonuclease NucS.